We begin with the raw amino-acid sequence, 240 residues long: NDR1/HIN1-like protein 2 (240 aa).

A helical membrane pass occupies residues 57–77; it reads NILIAVAVILGVAALILWLIF. N-linked (GlcNAc...) asparagine glycosylation is found at Asn-109, Asn-141, Asn-151, and Asn-223.

As to expression, expressed at low levels in roots, rosette leaves, cauline leaves, stems, flowers and siliques.

It localises to the cell membrane. May play a role in plant immunity. The protein is NDR1/HIN1-like protein 2 of Arabidopsis thaliana (Mouse-ear cress).